We begin with the raw amino-acid sequence, 125 residues long: Protein ApaG (125 aa).

The ApaG domain occupies 1–125 (MFTSSKVAIQ…FRLAIPTLIN (125 aa)).

This chain is Protein ApaG, found in Proteus mirabilis (strain HI4320).